A 909-amino-acid polypeptide reads, in one-letter code: Phosphoenolpyruvate carboxylase (909 aa).

Catalysis depends on residues His-138 and Lys-572.

Belongs to the PEPCase type 1 family. Mg(2+) is required as a cofactor.

The catalysed reaction is oxaloacetate + phosphate = phosphoenolpyruvate + hydrogencarbonate. Functionally, forms oxaloacetate, a four-carbon dicarboxylic acid source for the tricarboxylic acid cycle. The chain is Phosphoenolpyruvate carboxylase from Lactobacillus delbrueckii subsp. bulgaricus (strain ATCC 11842 / DSM 20081 / BCRC 10696 / JCM 1002 / NBRC 13953 / NCIMB 11778 / NCTC 12712 / WDCM 00102 / Lb 14).